A 276-amino-acid polypeptide reads, in one-letter code: Diaminopimelate epimerase (276 aa).

N13, Q46, and N66 together coordinate substrate. The active-site Proton donor is the C75. Residues G76–N77, N159, N192, and E210–R211 contribute to the substrate site. C219 serves as the catalytic Proton acceptor. A substrate-binding site is contributed by G220–S221.

The protein belongs to the diaminopimelate epimerase family. Homodimer.

The protein localises to the cytoplasm. It carries out the reaction (2S,6S)-2,6-diaminopimelate = meso-2,6-diaminopimelate. It participates in amino-acid biosynthesis; L-lysine biosynthesis via DAP pathway; DL-2,6-diaminopimelate from LL-2,6-diaminopimelate: step 1/1. Functionally, catalyzes the stereoinversion of LL-2,6-diaminopimelate (L,L-DAP) to meso-diaminopimelate (meso-DAP), a precursor of L-lysine and an essential component of the bacterial peptidoglycan. This is Diaminopimelate epimerase from Colwellia psychrerythraea (strain 34H / ATCC BAA-681) (Vibrio psychroerythus).